We begin with the raw amino-acid sequence, 286 residues long: Pantothenate synthetase (286 aa).

30–37 (MGNLHAGH) is a binding site for ATP. His-37 (proton donor) is an active-site residue. Gln-61 serves as a coordination point for (R)-pantoate. Beta-alanine is bound at residue Gln-61. 149–152 (GQKD) lines the ATP pocket. Gln-155 contacts (R)-pantoate. ATP is bound by residues Val-178 and 186–189 (LSSR).

This sequence belongs to the pantothenate synthetase family. In terms of assembly, homodimer.

Its subcellular location is the cytoplasm. The enzyme catalyses (R)-pantoate + beta-alanine + ATP = (R)-pantothenate + AMP + diphosphate + H(+). It participates in cofactor biosynthesis; (R)-pantothenate biosynthesis; (R)-pantothenate from (R)-pantoate and beta-alanine: step 1/1. In terms of biological role, catalyzes the condensation of pantoate with beta-alanine in an ATP-dependent reaction via a pantoyl-adenylate intermediate. This Stutzerimonas stutzeri (strain A1501) (Pseudomonas stutzeri) protein is Pantothenate synthetase.